Here is a 340-residue protein sequence, read N- to C-terminus: Guanine nucleotide-binding protein G(I)/G(S)/G(T) subunit beta-3 (340 aa).

7 WD repeats span residues G53–D83, L95–N125, A141–D170, G182–D212, G224–D254, S268–D298, and G310–N340.

It belongs to the WD repeat G protein beta family. G proteins are composed of 3 units, alpha, beta and gamma. Interacts with RASD2.

Guanine nucleotide-binding proteins (G proteins) are involved as a modulator or transducer in various transmembrane signaling systems. The beta and gamma chains are required for the GTPase activity, for replacement of GDP by GTP, and for G protein-effector interaction. The sequence is that of Guanine nucleotide-binding protein G(I)/G(S)/G(T) subunit beta-3 (Gnb3) from Mus musculus (Mouse).